Here is a 418-residue protein sequence, read N- to C-terminus: MLHPRARTMLLLSLPAVAIGIASSLILIVVMKIASVLQNLLWQRLPGTLGIAQDSPLWIIGVLTLTGIAVGLVIRFSQGHAGPDPACEPLIGAPVPPSALPGLIVALILGLAGGVSLGPEHPIMTVNIALAVAIGARLLPRVNRMEWTILASAGTIGALFGTPVAAALIFSQTLNGSSEVPLWDRLFAPLMAAAAGALTTGLFFHPHFSLPIAHYGQMEMTDILSGAIVAAIAIAAGMVAVWCLPRLHAMMNQMKNPVLVLGIGGFILGILGVIGGPVSLFKGLDEMQQMVANQAFSTSDYFLLAVIKLAALVVAAASGFRGGRIFPAVFVGVALGLMLHEHVPAVPAAITVSCAILGIVLVVTRDGWLSLFMAAVVVPNTTLLPLLCIVMLPAWLLLAGKPMMMVNRPKQQPPHDNV.

Helical transmembrane passes span 10 to 30, 54 to 74, 99 to 119, 120 to 140, 149 to 169, 186 to 206, 223 to 243, 258 to 278, 300 to 320, 322 to 342, 343 to 363, and 371 to 391; these read LLLS…LIVV, DSPL…GLVI, ALPG…SLGP, EHPI…RLLP, ILAS…AALI, LFAP…FFHP, ILSG…AVWC, VLVL…GGPV, DYFL…ASGF, GGRI…LHEH, VPAV…VLVV, and LFMA…CIVM.

It belongs to the chloride channel (TC 2.A.49) family.

It is found in the cell membrane. This chain is Putative ion-transport protein YfeO, found in Shigella boydii serotype 18 (strain CDC 3083-94 / BS512).